Consider the following 82-residue polypeptide: Protein transport protein SBH1 (82 aa).

The interval methionine 1 to asparagine 36 is disordered. The Cytoplasmic segment spans residues methionine 1–aspartate 53. Polar residues predominate over residues glycine 19 to asparagine 36. A helical membrane pass occupies residues proline 54–isoleucine 74.

Belongs to the SEC61-beta family. Component of the heterotrimeric Sec61 complex, which is composed of SSH1, SBH1 and SSS1. Presumably three to four Sec61 heterotrimers assemble into an oligomeric ring with a central aqueous pore. In cotranslational ER import, the pore diameter varies from 9-15 A in a ribosome-free resting state to 40-60 A in a functional state when associated with the ribosome. The Sec61 complex is part of a channel-forming translocon complex whose composition seem to change dependent upon different functional states. During post-translational ER import the Sec61 complex associates with the Sec62/63 complex to form the Sec complex. SBH1 interacts OST2, OST4 and WBP1 components of the OT complex.

Its subcellular location is the endoplasmic reticulum membrane. Its function is as follows. Part of the Sec61 complex, which is the major component of a channel-forming translocon complex that mediates protein translocation across the endoplasmic reticulum (ER). The functional states of the translocon complex include co- and post-translational ER import, cotranslational membrane protein integration and retrograde transport of misfolded proteins out of the ER. In the cotranslational pathway, ribosomes synthesizing presecretory proteins are targeted to the translocon by the cytosolic signal recognition particle (SRP) and its ER-localized receptor. The association of the Sec61 complex with the ribosome is mediated by the 28S rRNA of the large ribosomal subunit. SRP-independent post-translational translocation requires the association of additional factors, such as the Sec62/63 complex and KAR2. The polypeptide is Protein transport protein SBH1 (SBH1) (Saccharomyces cerevisiae (strain ATCC 204508 / S288c) (Baker's yeast)).